A 539-amino-acid chain; its full sequence is Polyol transporter 5 (539 aa).

Positions 1–11 are enriched in polar residues; sequence MTGATPENRTA. The interval 1–24 is disordered; sequence MTGATPENRTAPSPPPVKHVPESV. 12 helical membrane-spanning segments follow: residues 37-57, 73-93, 104-124, 127-147, 165-185, 196-216, 296-316, 333-353, 364-384, 391-411, 433-453, and 463-483; these read FACAILASMTSILLGYDIGVM, LQIGILAGSLNIYSLIGSCAA, YTIVLAGAIFFAGAILMGLSP, AFLMFGRFIAGIGVGYALMIA, SFPEVFINAGIMLGYVSNLAF, LMLGIGAVPSVILAIGVLAMP, IAAIGIHFFQQASGIDAVVLF, LLATVAVGVVKTSFILVATFL, LTSVGGMVLSLAALGTSLTII, VMWAVVVAIATVMTYVATFSI, GSSMGVVVNRVTSGVISISFL, and GAFYLFGGIATVAWVFFYTFL. 2 stretches are compositionally biased toward basic and acidic residues: residues 503–514 and 530–539; these read WRDSKSKPKGNP and QWKEGDTQSS. Residues 503-539 are disordered; the sequence is WRDSKSKPKGNPEKTVPNPEVEIGSNKQWKEGDTQSS.

It belongs to the major facilitator superfamily. Sugar transporter (TC 2.A.1.1) family. As to expression, highly expressed in roots. Expressed in vascular tissue of leaves, sepals and siliques.

It is found in the cell membrane. In terms of biological role, plasma membrane broad-spectrum sugar-proton symporter. Mediates the uptake of linear polyols such as sorbitol, xylitol, erythritol or glycerol. Can transport the cyclic polyol myo-inositol and different hexoses, pentoses (including ribose), tetroses and sugar alcohols. The polypeptide is Polyol transporter 5 (PLT5) (Arabidopsis thaliana (Mouse-ear cress)).